A 422-amino-acid chain; its full sequence is Testin (422 aa).

The PET domain occupies 92 to 199; the sequence is MILTNPVPAK…GDVKLPGELE (108 aa). The interval 198–224 is disordered; the sequence is LETKATDKNNVNSGDRSTSAAVGAMED. Polar residues predominate over residues 205–217; that stretch reads KNNVNSGDRSTSA. 3 consecutive LIM zinc-binding domains span residues 234 to 297, 299 to 359, and 362 to 422; these read YSCY…CDSE, PRCA…KHAA, and QGCH…KMMS.

It belongs to the prickle / espinas / testin family.

It is found in the cytoplasm. The protein localises to the cell junction. It localises to the focal adhesion. Functionally, scaffold protein that may play a role in cell adhesion, cell spreading and in the reorganization of the actin cytoskeleton. May play a role in the regulation of cell proliferation. May inhibit cell growth. The chain is Testin (TES) from Gallus gallus (Chicken).